The sequence spans 828 residues: MSRLIVKNLPPYLDEAGLKKHFSTVKDPKSAGFAPSDITDVKVVRARDGKTRRFGFVGFRSDETAEAAVKYFDTSFINSTKISVAVAMTFTDPNVPLSSRERKRQAAQRAREDAEDDREAKKARYLEKPMTIDDINGLGNASDPRLADYLDAMQVRSNAKTWANNDAGAVANEPQVIQSTASDDEYDEFTGKGDDEIDEDEDEEEESENKKDDDNEEAEEDEEDPVIEDGLAADPGVSDMDWLRQRQTRIKEGEPEEDRENRHTESKSEGKKGKGNAPKAATPVDEEPSEDPTIVSIRKTGRLFLRNLLYTAKEEDFRQLFSQYGELEEVHLPINTKTGQCKGFAHVQFEDPENAIAAYEAQDGKIFQGRLLHILPGKPKKDYNRLDEHDLKNLPLKKQQELKRKAEAAKQQFSWNSLYMNQDAVMESVAKSMGIKKSELIDPDSSDAAVKQALAEATVIGDVKSYFEKMGVDLASFDNKDRDDRVILVKNFPFGTTQPEIAEMFSEYGDLYKVMMPPAGTIAIVIFKHIPDARAAFAKLAFRRFKTSILYLEKGPKNLLPNEKMESDEVEHVKQDKIVTIEDKLSASDVMDTGSNDERPATASTSVFVKNLNFKTTSRVLTDAFKALDGFLVAQVKMKPDSKNKGKFLSMGFGFVEFSSKEAAEIAQKAMDGHVLDGHKLQLKISNRGQDEETTETKKAIDSKILIKNLPFEATKKDVQKLFGAFGSLKTVRVPKKFNSESRGFAFAEYVSAKEAEHAMSALQGTHLLGRRLVLQYAQADASNAEEEIERMQATVSKQAAQRSFADMKLAGEGKRRVDLEGEDEEEF.

In terms of domain architecture, RRM 1 spans 2–89; that stretch reads SRLIVKNLPP…TKISVAVAMT (88 aa). Disordered regions lie at residues 97-125 and 166-293; these read LSSR…KARY and DAGA…EDPT. Acidic residues-rich tracts occupy residues 195–207 and 214–227; these read DEID…EEES and DNEE…DPVI. Basic and acidic residues predominate over residues 241–272; it reads DWLRQRQTRIKEGEPEEDRENRHTESKSEGKK. 4 consecutive RRM domains span residues 301–379, 485–557, 605–688, and 703–780; these read GRLF…PGKP, RVIL…KGPK, TSVF…ISNR, and SKIL…YAQA.

The protein belongs to the RRM MRD1 family.

It localises to the nucleus. Its function is as follows. Involved in pre-rRNA processing. This chain is Multiple RNA-binding domain-containing protein 1 (MRD1), found in Yarrowia lipolytica (strain CLIB 122 / E 150) (Yeast).